The sequence spans 222 residues: Interleukin-12 subunit alpha (222 aa).

A signal peptide spans 1 to 25; that stretch reads MCPPRGLLLVAILVLLNHLDHLSLA. 3 cysteine pairs are disulfide-bonded: C40-C113, C67-C199, and C88-C126. N42, N96, and N110 each carry an N-linked (GlcNAc...) asparagine glycan.

Belongs to the IL-6 superfamily. Heterodimer with IL12B; disulfide-linked. This heterodimer is known as interleukin IL-12. Heterodimer with EBI3/IL27B; not disulfide-linked. This heterodimer is known as interleukin IL-35. Interacts with NBR1; this interaction promotes IL-12 secretion.

It localises to the secreted. Functionally, heterodimerizes with IL12B to form the IL-12 cytokine or with EBI3/IL27B to form the IL-35 cytokine. IL-12 is primarily produced by professional antigen-presenting cells (APCs) such as B-cells and dendritic cells (DCs) as well as macrophages and granulocytes and regulates T-cell and natural killer-cell responses, induces the production of interferon-gamma (IFN-gamma), favors the differentiation of T-helper 1 (Th1) cells and is an important link between innate resistance and adaptive immunity. Mechanistically, exerts its biological effects through a receptor composed of IL12R1 and IL12R2 subunits. Binding to the receptor results in the rapid tyrosine phosphorylation of a number of cellular substrates including the JAK family kinases TYK2 and JAK2. In turn, recruited STAT4 gets phosphorylated and translocates to the nucleus where it regulates cytokine/growth factor responsive genes. As part of IL-35, plays essential roles in maintaining the immune homeostasis of the liver microenvironment and also functions as an immune-suppressive cytokine. Mediates biological events through unconventional receptors composed of IL12RB2 and gp130/IL6ST heterodimers or homodimers. Signaling requires the transcription factors STAT1 and STAT4, which form a unique heterodimer that binds to distinct DNA sites. This Equus caballus (Horse) protein is Interleukin-12 subunit alpha (IL12A).